Reading from the N-terminus, the 529-residue chain is Intraflagellar transport protein 56 (529 aa).

A disordered region spans residues 1-21 (MLHNRMTTAFERSKEQEHEAA). A compositionally biased stretch (basic and acidic residues) spans 11 to 21 (ERSKEQEHEAA). TPR repeat units lie at residues 57 to 90 (GNAD…KNPP), 154 to 187 (SADQ…QPEC), 189 to 221 (AIYM…AEDS), 285 to 321 (SEAR…EYTL), 359 to 392 (VLGR…PKES), and 428 to 461 (PVHR…SLQT).

It belongs to the IFT56 family.

The protein localises to the cell projection. It is found in the cilium. Its subcellular location is the flagellum. The protein resides in the cytoplasm. It localises to the cytoskeleton. The protein localises to the flagellum axoneme. It is found in the flagellum basal body. Functionally, component of the intraflagellar transport complex B (IFT-B) involved in flagellar assembly. The chain is Intraflagellar transport protein 56 from Giardia intestinalis (strain ATCC 50803 / WB clone C6) (Giardia lamblia).